The following is a 202-amino-acid chain: dITP/XTP pyrophosphatase (202 aa).

10-15 contacts substrate; that stretch reads TGNAGK. 2 residues coordinate Mg(2+): aspartate 46 and aspartate 75. Catalysis depends on aspartate 75, which acts as the Proton acceptor. Residues serine 76, 160 to 163, lysine 183, and 188 to 189 contribute to the substrate site; these read FGYD and HR.

Belongs to the HAM1 NTPase family. In terms of assembly, homodimer. Mg(2+) is required as a cofactor.

The catalysed reaction is XTP + H2O = XMP + diphosphate + H(+). The enzyme catalyses dITP + H2O = dIMP + diphosphate + H(+). It catalyses the reaction ITP + H2O = IMP + diphosphate + H(+). Its function is as follows. Pyrophosphatase that catalyzes the hydrolysis of nucleoside triphosphates to their monophosphate derivatives, with a high preference for the non-canonical purine nucleotides XTP (xanthosine triphosphate), dITP (deoxyinosine triphosphate) and ITP. Seems to function as a house-cleaning enzyme that removes non-canonical purine nucleotides from the nucleotide pool, thus preventing their incorporation into DNA/RNA and avoiding chromosomal lesions. This chain is dITP/XTP pyrophosphatase, found in Idiomarina loihiensis (strain ATCC BAA-735 / DSM 15497 / L2-TR).